A 333-amino-acid chain; its full sequence is Electron transfer flavoprotein subunit alpha, mitochondrial (333 aa).

A mitochondrion-targeting transit peptide spans 1–19 (MFRAAAPGQLRRAASSLRF). The domain I stretch occupies residues 20-204 (QSTLVIAEHA…EISEWLDQKL (185 aa)). At Lys59 the chain carries N6-acetyllysine; alternate. Lys59 is modified (N6-succinyllysine; alternate). Lys62 bears the N6-acetyllysine mark. N6-acetyllysine; alternate is present on Lys69. At Lys69 the chain carries N6-succinyllysine; alternate. Lys75 bears the N6-acetyllysine mark. Thr93 carries the phosphothreonine modification. Residues Lys101 and Lys139 each carry the N6-acetyllysine modification. Position 140 is a phosphoserine (Ser140). Lys158 carries the N6-acetyllysine; alternate modification. Lys158 is modified (N6-succinyllysine; alternate). The residue at position 164 (Lys164) is an N6-acetyllysine. Lys187 is subject to N6-succinyllysine. Lys203 is modified (N6-acetyllysine; alternate). N6-succinyllysine; alternate is present on Lys203. The tract at residues 205 to 333 (TKSDRPELTG…PEMTEILKKK (129 aa)) is domain II. An N6-succinyllysine modification is found at Lys216. Arg223 is an FAD binding site. Residues Lys226 and Lys232 each carry the N6-acetyllysine; alternate modification. An N6-succinyllysine; alternate mark is found at Lys226 and Lys232. FAD-binding positions include Ser248, 263–266 (VGQT), 281–286 (SGAIQH), and Asn300. Lys301 carries the N6-succinyllysine modification. Residue 318–319 (DL) coordinates FAD.

The protein belongs to the ETF alpha-subunit/FixB family. As to quaternary structure, heterodimer composed of ETFA and ETFB. Identified in a complex that contains ETFA, ETFB and ETFRF1. Interaction with ETFRF1 promotes dissociation of the bound FAD and loss of electron transfer activity. Interacts with TASOR. FAD serves as cofactor.

The protein resides in the mitochondrion matrix. Functionally, heterodimeric electron transfer flavoprotein that accepts electrons from several mitochondrial dehydrogenases, including acyl-CoA dehydrogenases, glutaryl-CoA and sarcosine dehydrogenase. It transfers the electrons to the main mitochondrial respiratory chain via ETF-ubiquinone oxidoreductase (ETF dehydrogenase). Required for normal mitochondrial fatty acid oxidation and normal amino acid metabolism. The protein is Electron transfer flavoprotein subunit alpha, mitochondrial (ETFA) of Macaca fascicularis (Crab-eating macaque).